Here is a 295-residue protein sequence, read N- to C-terminus: MCIGKVTSSWRSAASIILACKTTRRVLMLKRGTTAKFMPNTMVFPGGVVDKTDAKLGDEFRIAAVRELFEESGVLSTKNGWQTSANNPDMTSLKADIVNDTSKFEQLSGTICADNLIEWDTFITPANYPRRFLTKFYLMLVDDEPAIDLCTSEMSEYNWIEPKECVDEAYAGKYALPPPQVYELTRLSQVKDWDLCEKYGNVKKPICPQPIKTIGENLITNCFPGDYMYIDENSLQQPLRQMSADRVTVDPTQPTHRATYYSEPMYGKVRLYQHLLKPADIAAFHQFDTHSKDLL.

One can recognise a Nudix hydrolase domain in the interval 9-182; sequence SWRSAASIIL…KYALPPPQVY (174 aa). A Nudix box motif is present at residues 52–73; that stretch reads TDAKLGDEFRIAAVRELFEESG. Residues glutamate 67 and glutamate 71 each coordinate Mg(2+).

The protein belongs to the Nudix hydrolase family. Mg(2+) is required as a cofactor. Mn(2+) serves as cofactor.

Its function is as follows. Probably mediates the hydrolysis of some nucleoside diphosphate derivatives. The protein is Putative nudix hydrolase 7 (ndx-7) of Caenorhabditis elegans.